A 374-amino-acid chain; its full sequence is Type IV secretion system protein PtlG homolog (374 aa).

A helical transmembrane segment spans residues 38 to 56; the sequence is WMFALVAVALSCLLATGIW. The segment at 87 to 116 is disordered; it reads PREPEPAPLPDMPAAPNPILPQPRPAPPVP. The segment covering 92–116 has biased composition (pro residues); that stretch reads PAPLPDMPAAPNPILPQPRPAPPVP.

This sequence belongs to the TrbI/VirB10 family.

It localises to the cell membrane. This chain is Type IV secretion system protein PtlG homolog (ptlG), found in Bordetella parapertussis (strain 12822 / ATCC BAA-587 / NCTC 13253).